We begin with the raw amino-acid sequence, 377 residues long: MFNPLVLDSPSVIFDNGSGLCKAGLSGEIGPRHVTSSVVGYPKFKAPPTGASQKKYFVGEEALYKQEALSLHYPIDRGLVTSWDDVEKLWRHLFEWELGVKPCERPVLVTEPSLNPRENREKTAEMMFETFEVPAFYLSDQAVLALYSSACVTGLVVDSGDGVTCTVPIYEGYSLPHAVSKLYVAGKDITELLTRLLLASGRAFPCPLEKALADDIKEKLCYVALEPEEELSRRAEDVLREYKLPDGNVIYIGDQLYQAPEVLFSPDQLGTHGPGLAQMASNSITKCDADIQKTLFGEIVLSGGSTLFQGLDDRLLKELEQLASKGVPIKITAPPDRWFSTWIGASIVTSLSSFKQMWITAADFKEFGVSVVQRRCF.

Belongs to the actin family.

It is found in the cytoplasm. The protein resides in the cytoskeleton. In Mus musculus (Mouse), this protein is Actin-related protein T2 (Actrt2).